Here is a 137-residue protein sequence, read N- to C-terminus: Photosystem II reaction center W protein, chloroplastic (137 aa).

The N-terminal 64 residues, 1 to 64 (MATITASSSA…ETTTTTNKSM (64 aa)), are a transit peptide targeting the chloroplast. The transit peptide at 65–83 (GASLLAAAAAATISNPAMA) directs the protein to the thylakoid. Topologically, residues 84 to 103 (LVDERMSTEGTGLPFGLSNN) are lumenal, thylakoid. A helical transmembrane segment spans residues 104-123 (LLGWILFGVFGLIWALYFVY). Topologically, residues 124 to 137 (ASGLEEDEESGLSL) are stromal.

Part of the photosystem II complex. PSII is composed of 1 copy each of membrane proteins PsbA, PsbB, PsbC, PsbD, numerous small proteins, at least 3 peripheral proteins of the oxygen-evolving complex and a large number of cofactors. It forms dimeric complexes.

The protein localises to the plastid. It is found in the chloroplast thylakoid membrane. In terms of biological role, stabilizes dimeric photosystem II (PSII). In its absence no dimeric PSII accumulates and there is a reduction of monomeric PSII. The polypeptide is Photosystem II reaction center W protein, chloroplastic (Spinacia oleracea (Spinach)).